We begin with the raw amino-acid sequence, 692 residues long: Elongation factor G (692 aa).

Residues 8–283 (DRYRNIGIMA…AVVDFLPSPL (276 aa)) form the tr-type G domain. GTP contacts are provided by residues 17 to 24 (AHIDAGKT), 81 to 85 (DTPGH), and 135 to 138 (NKMD).

This sequence belongs to the TRAFAC class translation factor GTPase superfamily. Classic translation factor GTPase family. EF-G/EF-2 subfamily.

The protein localises to the cytoplasm. Catalyzes the GTP-dependent ribosomal translocation step during translation elongation. During this step, the ribosome changes from the pre-translocational (PRE) to the post-translocational (POST) state as the newly formed A-site-bound peptidyl-tRNA and P-site-bound deacylated tRNA move to the P and E sites, respectively. Catalyzes the coordinated movement of the two tRNA molecules, the mRNA and conformational changes in the ribosome. In Rhodospirillum rubrum (strain ATCC 11170 / ATH 1.1.1 / DSM 467 / LMG 4362 / NCIMB 8255 / S1), this protein is Elongation factor G.